Consider the following 455-residue polypeptide: ATP-dependent protease ATPase subunit HslU (455 aa).

Residues Ile19 and 61 to 66 (GVGKTE) contribute to the ATP site. Residues 144–163 (ESKVGFANEPAEDAASKKEK) are disordered. Residues Asp268, Glu333, and Arg405 each coordinate ATP.

Belongs to the ClpX chaperone family. HslU subfamily. In terms of assembly, a double ring-shaped homohexamer of HslV is capped on each side by a ring-shaped HslU homohexamer. The assembly of the HslU/HslV complex is dependent on binding of ATP.

Its subcellular location is the cytoplasm. ATPase subunit of a proteasome-like degradation complex; this subunit has chaperone activity. The binding of ATP and its subsequent hydrolysis by HslU are essential for unfolding of protein substrates subsequently hydrolyzed by HslV. HslU recognizes the N-terminal part of its protein substrates and unfolds these before they are guided to HslV for hydrolysis. The chain is ATP-dependent protease ATPase subunit HslU from Francisella tularensis subsp. holarctica (strain FTNF002-00 / FTA).